Here is a 450-residue protein sequence, read N- to C-terminus: MEFLSRISQHLGIVEDVDRDGTVFILGKEYAPLNNKSRTDVETDDSALESLINIVSLNPGLLSDVHSRVFFTYRTQFTPIRRNENGPSPINFTLFFRDNPINTLENALTDPDSFYSDIGWGCMIRTGQALLANAIQRVKLAREFRINASRIDDNELNLIRWFQDDVKYPLSLHNFVKAEEKISGMKPGQWFGPSATARSIKTLIEGFPLCGIKNCIISTQSADIYEDEVTRIFHKDRDANLLLLFAVRLGVDKINSLYWKDIFKILSSPYSVGIAGGKPSSSLYFFGYQNENLFYLDPHNTQQSSLMMDDLEFYRSCHGHKFNKLHISETDPSMLLGMLISGKNEWDQFHTYFRDSQIIQFLTTRPENDLYQSANMSVGSDSIHSLESDIQDTGEYVDVGTLVSGKQMSSPQPKDEEFEDVKCKSQRIIVCEDPADPEVEQVLVEDSSSC.

Residue Cys122 is the Nucleophile of the active site. Active-site residues include Asp297 and His299.

Belongs to the peptidase C54 family.

It localises to the cytoplasm. The protein localises to the nucleus. It is found in the preautophagosomal structure. The catalysed reaction is [protein]-C-terminal L-amino acid-glycyl-phosphatidylethanolamide + H2O = [protein]-C-terminal L-amino acid-glycine + a 1,2-diacyl-sn-glycero-3-phosphoethanolamine. Functionally, cysteine protease that plays a key role in cytoplasm to vacuole transport (Cvt) and autophagy by mediating both proteolytic activation and delipidation of ATG8. Required for selective autophagic degradation of the nucleus (nucleophagy) as well as for mitophagy which contributes to regulate mitochondrial quantity and quality by eliminating the mitochondria to a basal level to fulfill cellular energy requirements and preventing excess ROS production. The protease activity is required for proteolytic activation of ATG8: cleaves the C-terminal amino acid of ATG8 to reveal a C-terminal glycine. ATG8 ubiquitin-like activity requires the exposure of the glycine at the C-terminus for its conjugation to phosphatidylethanolamine (PE) and its insertion to membranes, which is necessary for autophagy. The ATG8-PE conjugate mediates tethering between adjacent membranes and stimulates membrane hemifusion, leading to expansion of the autophagosomal membrane during autophagy. In addition to the protease activity, also catalyzes deconjugation of PE-conjugated forms of ATG8 during macroautophagy: ATG8 delipidation is required to release the protein from membranes, which facilitates multiple events during macroautophagy, and especially for efficient autophagosome biogenesis, the assembly of ATG9-containing tubulovesicular clusters into phagophores/autophagosomes, and for the disassembly of PAS-associated ATG components. ATG8 delipidation by ATG4 also recycles ATG8-PE generated on inappropriate membranes to maintain a reservoir of unlipidated ATG8 that is required for autophagosome formation at the PAS. This chain is Probable cysteine protease ATG4 (ATG4), found in Kluyveromyces lactis (strain ATCC 8585 / CBS 2359 / DSM 70799 / NBRC 1267 / NRRL Y-1140 / WM37) (Yeast).